The primary structure comprises 133 residues: Ycf54-like protein (133 aa).

Belongs to the ycf54 family.

The protein is Ycf54-like protein of Synechocystis sp. (strain ATCC 27184 / PCC 6803 / Kazusa).